Consider the following 263-residue polypeptide: Uroporphyrinogen-III C-methyltransferase (263 aa).

Residues P20, 96 to 98 (GGD), 126 to 127 (TA), M180, and A237 each bind S-adenosyl-L-homocysteine.

This sequence belongs to the precorrin methyltransferase family.

The enzyme catalyses uroporphyrinogen III + 2 S-adenosyl-L-methionine = precorrin-2 + 2 S-adenosyl-L-homocysteine + H(+). The protein operates within cofactor biosynthesis; adenosylcobalamin biosynthesis; precorrin-2 from uroporphyrinogen III: step 1/1. It functions in the pathway porphyrin-containing compound metabolism; siroheme biosynthesis; precorrin-2 from uroporphyrinogen III: step 1/1. Its function is as follows. Catalyzes the two successive C-2 and C-7 methylation reactions involved in the conversion of uroporphyrinogen III to precorrin-2 via the intermediate formation of precorrin-1. It is a step in the biosynthesis of both cobalamin (vitamin B12) and siroheme. The sequence is that of Uroporphyrinogen-III C-methyltransferase (cobA) from Synechocystis sp. (strain ATCC 27184 / PCC 6803 / Kazusa).